Reading from the N-terminus, the 255-residue chain is 2-(S)-hydroxypropyl-CoM dehydrogenase 3 (255 aa).

Residues I19, D38, 64 to 65, and N91 contribute to the NAD(+) site; that span reads DV. Residues S143 and Y156 each coordinate (S)-2-hydroxypropyl-coenzyme M. The Proton acceptor role is filled by Y156. Residue K160 coordinates NAD(+). T188 contributes to the (S)-2-hydroxypropyl-coenzyme M binding site. Position 189–193 (189–193) interacts with NAD(+); sequence VTSTG. Y215 is a binding site for (S)-2-hydroxypropyl-coenzyme M.

Belongs to the short-chain dehydrogenases/reductases (SDR) family. In terms of assembly, homotetramer.

It catalyses the reaction (S)-2-hydroxypropyl-coenzyme M + NAD(+) = 2-oxopropyl-coenzyme M + NADH + H(+). Its activity is regulated as follows. Not inhibited by 2-(2-methyl-2-hydroxypropylthio)ethanesulfonate (M-HPC), an achiral analog of both R-HPC and S-HPC. Involved in aliphatic epoxide carboxylation. Catalyzes the reversible oxidation of (2S)-2-hydroxypropyl-coenzyme M (S-HPC) to 2-oxopropyl-coenzyme M (2-KPC). The enzyme is highly specific for the S enantiomers. In vitro can also use the aliphatic ketone 2-butanone and the aliphatic alcohol 2-propanol, and shows an inherent stereoselectivity for 2-butanone reduction. The protein is 2-(S)-hydroxypropyl-CoM dehydrogenase 3 of Xanthobacter autotrophicus (strain ATCC BAA-1158 / Py2).